Reading from the N-terminus, the 262-residue chain is Acyl-[acyl-carrier-protein]--UDP-N-acetylglucosamine O-acyltransferase (262 aa).

Belongs to the transferase hexapeptide repeat family. LpxA subfamily. In terms of assembly, homotrimer.

It is found in the cytoplasm. It catalyses the reaction a (3R)-hydroxyacyl-[ACP] + UDP-N-acetyl-alpha-D-glucosamine = a UDP-3-O-[(3R)-3-hydroxyacyl]-N-acetyl-alpha-D-glucosamine + holo-[ACP]. Its pathway is glycolipid biosynthesis; lipid IV(A) biosynthesis; lipid IV(A) from (3R)-3-hydroxytetradecanoyl-[acyl-carrier-protein] and UDP-N-acetyl-alpha-D-glucosamine: step 1/6. Involved in the biosynthesis of lipid A, a phosphorylated glycolipid that anchors the lipopolysaccharide to the outer membrane of the cell. This chain is Acyl-[acyl-carrier-protein]--UDP-N-acetylglucosamine O-acyltransferase, found in Verminephrobacter eiseniae (strain EF01-2).